The chain runs to 899 residues: Alanine--tRNA ligase (899 aa).

Positions 595, 599, 703, and 707 each coordinate Zn(2+).

It belongs to the class-II aminoacyl-tRNA synthetase family. Zn(2+) serves as cofactor.

The protein resides in the cytoplasm. The enzyme catalyses tRNA(Ala) + L-alanine + ATP = L-alanyl-tRNA(Ala) + AMP + diphosphate. Its function is as follows. Catalyzes the attachment of alanine to tRNA(Ala) in a two-step reaction: alanine is first activated by ATP to form Ala-AMP and then transferred to the acceptor end of tRNA(Ala). Also edits incorrectly charged Ser-tRNA(Ala) and Gly-tRNA(Ala) via its editing domain. The protein is Alanine--tRNA ligase of Caldivirga maquilingensis (strain ATCC 700844 / DSM 13496 / JCM 10307 / IC-167).